Here is a 138-residue protein sequence, read N- to C-terminus: MAGIQLADEVTSVYNDFKLSHKYRYIVFKMNDGMTEVVVEKTAEKNATYDDFLKDLPEKSARYAVYDLEYDTPEGLRQKIIFYLWTPEGCKIREKMLYSATKATIKQALVGLSAEIQATDAGELNLDEVIAKVKTISK.

An ADF-H domain is found at 3 to 134 (GIQLADEVTS…NLDEVIAKVK (132 aa)).

It belongs to the actin-binding proteins ADF family. As to quaternary structure, interacts with F-actin. Does not interact with G-actin. Interacts with 14-3-3 protein 3.

The protein localises to the cytoplasm. It localises to the cytoskeleton. Its subcellular location is the cell membrane. It is found in the cell projection. The protein resides in the phagocytic cup. The protein localises to the pseudopodium. Actin-binding protein that severs actin filaments. This chain is Actophorin, found in Entamoeba histolytica (strain ATCC 30459 / HM-1:IMSS / ABRM).